Consider the following 197-residue polypeptide: MLERIKDSFTHSIQTKIDAAEALPESIEKAAEMMVQCLLGGNKILACGNGGSAGDAQHFSAELLNRYEIERPPLPAIALTTDTSTITAIGNDYSYDEIFSKQILALGQPGDILLAISTSGNSGNVIKAMEAALSRDMTIVALTGKDGGAMAGLMGTNDVEVRVPSNVTARIQEVHLLVIHCLCDNIDRTLFPQDDQA.

An SIS domain is found at 34–196; the sequence is MVQCLLGGNK…DRTLFPQDDQ (163 aa). Residue 49–51 coordinates substrate; it reads NGG. His-58 and Glu-62 together coordinate Zn(2+). Substrate-binding positions include Glu-62, 91–92, 117–119, Ser-122, and Gln-172; these read ND and STS. Gln-172 and His-180 together coordinate Zn(2+).

The protein belongs to the SIS family. GmhA subfamily. In terms of assembly, homotetramer. Zn(2+) serves as cofactor.

It is found in the cytoplasm. It carries out the reaction 2 D-sedoheptulose 7-phosphate = D-glycero-alpha-D-manno-heptose 7-phosphate + D-glycero-beta-D-manno-heptose 7-phosphate. It functions in the pathway carbohydrate biosynthesis; D-glycero-D-manno-heptose 7-phosphate biosynthesis; D-glycero-alpha-D-manno-heptose 7-phosphate and D-glycero-beta-D-manno-heptose 7-phosphate from sedoheptulose 7-phosphate: step 1/1. Functionally, catalyzes the isomerization of sedoheptulose 7-phosphate in D-glycero-D-manno-heptose 7-phosphate. In Shewanella loihica (strain ATCC BAA-1088 / PV-4), this protein is Phosphoheptose isomerase.